Here is a 414-residue protein sequence, read N- to C-terminus: Transforming growth factor beta-2 proprotein (414 aa).

The signal sequence occupies residues 1 to 20 (MHYCVLSAFLLLHLVTVALS). N-linked (GlcNAc...) asparagine glycosylation is found at asparagine 72, asparagine 140, and asparagine 241. 4 cysteine pairs are disulfide-bonded: cysteine 309–cysteine 318, cysteine 317–cysteine 380, cysteine 346–cysteine 411, and cysteine 350–cysteine 413.

Belongs to the TGF-beta family. As to quaternary structure, interacts with the serine proteases, HTRA1 and HTRA3. Interacts with ASPN. Interacts with MFAP5. In terms of assembly, interacts with Transforming growth factor beta-2 (TGF-beta-2) chain; interaction is non-covalent and maintains (TGF-beta-2) in a latent state. Interacts with LRRC32/GARP; leading to regulate activation of TGF-beta-2. Interacts with NREP; the interaction results in a decrease in TGFB2 autoinduction. Transforming growth factor beta-2: Homodimer; disulfide-linked. Transforming growth factor beta-2: Interacts with TGF-beta receptors (TGFBR1 and TGFBR2), leading to signal transduction. In terms of processing, the precursor proprotein is cleaved in the Golgi apparatus to form Transforming growth factor beta-2 (TGF-beta-2) and Latency-associated peptide (LAP) chains, which remain non-covalently linked, rendering TGF-beta-2 inactive.

The protein resides in the secreted. It localises to the extracellular space. It is found in the extracellular matrix. Precursor of the Latency-associated peptide (LAP) and Transforming growth factor beta-2 (TGF-beta-2) chains, which constitute the regulatory and active subunit of TGF-beta-2, respectively. In terms of biological role, required to maintain the Transforming growth factor beta-2 (TGF-beta-2) chain in a latent state during storage in extracellular matrix. Associates non-covalently with TGF-beta-2 and regulates its activation via interaction with 'milieu molecules', such as LTBP1 and LRRC32/GARP, that control activation of TGF-beta-2. Its function is as follows. Multifunctional protein that regulates various processes such as angiogenesis and heart development. Activation into mature form follows different steps: following cleavage of the proprotein in the Golgi apparatus, Latency-associated peptide (LAP) and Transforming growth factor beta-2 (TGF-beta-2) chains remain non-covalently linked rendering TGF-beta-2 inactive during storage in extracellular matrix. At the same time, LAP chain interacts with 'milieu molecules', such as LTBP1 and LRRC32/GARP, that control activation of TGF-beta-2 and maintain it in a latent state during storage in extracellular milieus. Once activated following release of LAP, TGF-beta-2 acts by binding to TGF-beta receptors (TGFBR1 and TGFBR2), which transduce signal. The chain is Transforming growth factor beta-2 proprotein (TGFB2) from Bos taurus (Bovine).